The sequence spans 158 residues: MVDKVPMTQGGFVNLQEELRWRQQEERPRIIEAIAEARAHGDLSENAEYHAAKEAQSHNEGRISELEDLIARAEVIDLSKMSGSKIKFGARVKLVDEDTEEEKTYQIVGDQEADVKQGRISISSPIARALIGKEVGDSIEVNAPGGSKAYEILAVQWG.

Belongs to the GreA/GreB family.

Functionally, necessary for efficient RNA polymerase transcription elongation past template-encoded arresting sites. The arresting sites in DNA have the property of trapping a certain fraction of elongating RNA polymerases that pass through, resulting in locked ternary complexes. Cleavage of the nascent transcript by cleavage factors such as GreA or GreB allows the resumption of elongation from the new 3'terminus. GreA releases sequences of 2 to 3 nucleotides. The chain is Transcription elongation factor GreA from Sinorhizobium medicae (strain WSM419) (Ensifer medicae).